Here is a 62-residue protein sequence, read N- to C-terminus: Large ribosomal subunit protein bL28 (62 aa).

This sequence belongs to the bacterial ribosomal protein bL28 family.

In Acetivibrio thermocellus (strain ATCC 27405 / DSM 1237 / JCM 9322 / NBRC 103400 / NCIMB 10682 / NRRL B-4536 / VPI 7372) (Clostridium thermocellum), this protein is Large ribosomal subunit protein bL28.